The sequence spans 276 residues: Undecaprenyl-diphosphatase (276 aa).

Helical transmembrane passes span 1–21, 39–59, 84–104, 115–135, 159–179, 188–208, 222–242, and 253–273; these read MSWL…FLPV, AGAS…LIYF, YRLG…GLLF, LWLV…AEYY, LALM…LFLG, FGFL…LPDA, QLIV…AWFL, and FVGY…TGVL.

This sequence belongs to the UppP family.

The protein resides in the cell membrane. It carries out the reaction di-trans,octa-cis-undecaprenyl diphosphate + H2O = di-trans,octa-cis-undecaprenyl phosphate + phosphate + H(+). Catalyzes the dephosphorylation of undecaprenyl diphosphate (UPP). Confers resistance to bacitracin. In Mycolicibacterium smegmatis (strain ATCC 700084 / mc(2)155) (Mycobacterium smegmatis), this protein is Undecaprenyl-diphosphatase.